The following is a 337-amino-acid chain: D-alanine--D-alanine ligase (337 aa).

The region spanning 124-330 (KMWFSALGIP…FTEYLSLVIN (207 aa)) is the ATP-grasp domain. An ATP-binding site is contributed by 154–209 (ALAQWGSIFVKAASQGSSVGCYKVDDSDKVAGVLKDAFGYAPYVIVEKTIKARELE). Mg(2+) is bound by residues D284, E297, and N299.

This sequence belongs to the D-alanine--D-alanine ligase family. It depends on Mg(2+) as a cofactor. Requires Mn(2+) as cofactor.

The protein resides in the cytoplasm. It catalyses the reaction 2 D-alanine + ATP = D-alanyl-D-alanine + ADP + phosphate + H(+). It functions in the pathway cell wall biogenesis; peptidoglycan biosynthesis. Functionally, cell wall formation. The protein is D-alanine--D-alanine ligase of Shewanella baltica (strain OS195).